The chain runs to 122 residues: MPRIIGIDIPAKKKLKISLTYIYGIGPALSKEIIARLQLNPEARAAELTEEEVGRLNALLQSDYVVEGDLRRRVQSDIKRLITIHAYRGQRHRLSLPVRGQRTKTNSRTRKGKRKTVAGKKK.

The disordered stretch occupies residues 94–122 (LSLPVRGQRTKTNSRTRKGKRKTVAGKKK). A compositionally biased stretch (basic residues) spans 101-122 (QRTKTNSRTRKGKRKTVAGKKK).

The protein belongs to the universal ribosomal protein uS13 family. As to quaternary structure, part of the 30S ribosomal subunit. Forms a loose heterodimer with protein S19. Forms two bridges to the 50S subunit in the 70S ribosome.

Functionally, located at the top of the head of the 30S subunit, it contacts several helices of the 16S rRNA. In the 70S ribosome it contacts the 23S rRNA (bridge B1a) and protein L5 of the 50S subunit (bridge B1b), connecting the 2 subunits; these bridges are implicated in subunit movement. Contacts the tRNAs in the A and P-sites. This chain is Small ribosomal subunit protein uS13, found in Chlamydia trachomatis serovar A (strain ATCC VR-571B / DSM 19440 / HAR-13).